The following is a 179-amino-acid chain: MEESATVEVVVGRVGRAHGLRGDVVVEVRTDEPDARFGVGATVQIEGSRRDLTVVRSRWAKGCLIVAFDEVKDRQGAEELRGSVLVVDVEPNDDPDDPDEFWDRRLRGLTVVDESGKSRGAVKDVLHMPAQDVLVIDVSGEEHLVPFVHQLVPTVDVASGRIVVSGIPGLLDSNAEEAR.

One can recognise a PRC barrel domain in the interval 98–170 (PDEFWDRRLR…RIVVSGIPGL (73 aa)).

The protein belongs to the RimM family. In terms of assembly, binds ribosomal protein uS19.

It is found in the cytoplasm. Its function is as follows. An accessory protein needed during the final step in the assembly of 30S ribosomal subunit, possibly for assembly of the head region. Essential for efficient processing of 16S rRNA. May be needed both before and after RbfA during the maturation of 16S rRNA. It has affinity for free ribosomal 30S subunits but not for 70S ribosomes. In Cutibacterium acnes (strain DSM 16379 / KPA171202) (Propionibacterium acnes), this protein is Ribosome maturation factor RimM.